The following is a 183-amino-acid chain: Large ribosomal subunit protein uL6 (183 aa).

This sequence belongs to the universal ribosomal protein uL6 family. Part of the 50S ribosomal subunit.

Its function is as follows. This protein binds to the 23S rRNA, and is important in its secondary structure. It is located near the subunit interface in the base of the L7/L12 stalk, and near the tRNA binding site of the peptidyltransferase center. This Methanococcus aeolicus (strain ATCC BAA-1280 / DSM 17508 / OCM 812 / Nankai-3) protein is Large ribosomal subunit protein uL6.